The primary structure comprises 145 residues: Protein FimA (145 aa).

Belongs to the fimbrial protein family.

The protein resides in the fimbrium. This chain is Protein FimA (fimA), found in Bordetella pertussis.